A 320-amino-acid polypeptide reads, in one-letter code: Cytochrome f (320 aa).

The signal sequence occupies residues 1–35 (MRNINTYDWMKKWMTRSISILVMIHMITRTSISNA). Residues Tyr36, Cys56, Cys59, and His60 each coordinate heme. The chain crosses the membrane as a helical span at residues 286–306 (VQGLLLLLASVILAQIFLVLK).

The protein belongs to the cytochrome f family. As to quaternary structure, the 4 large subunits of the cytochrome b6-f complex are cytochrome b6, subunit IV (17 kDa polypeptide, petD), cytochrome f and the Rieske protein, while the 4 small subunits are PetG, PetL, PetM and PetN. The complex functions as a dimer. Heme serves as cofactor.

It is found in the plastid. Its subcellular location is the chloroplast thylakoid membrane. Functionally, component of the cytochrome b6-f complex, which mediates electron transfer between photosystem II (PSII) and photosystem I (PSI), cyclic electron flow around PSI, and state transitions. This Cycas taitungensis (Prince sago) protein is Cytochrome f.